A 566-amino-acid chain; its full sequence is Class II hydrophobin FOXG_02748 (566 aa).

A signal peptide spans 1–22 (MKSKSIMAASTVMELALAQASA). 4 cysteine pairs are disulfide-bonded: Cys-497–Cys-546, Cys-507–Cys-537, Cys-508–Cys-520, and Cys-547–Cys-558.

Belongs to the cerato-ulmin hydrophobin family. In terms of assembly, homodimer. Homodimers further self-assemble to form highly ordered films at water-air interfaces through intermolecular interactions.

Its subcellular location is the secreted. The protein resides in the cell wall. Functionally, aerial growth, conidiation, and dispersal of filamentous fungi in the environment rely upon a capability of their secreting small amphipathic proteins called hydrophobins (HPBs) with low sequence identity. Class I can self-assemble into an outermost layer of rodlet bundles on aerial cell surfaces, conferring cellular hydrophobicity that supports fungal growth, development and dispersal; whereas Class II form highly ordered films at water-air interfaces through intermolecular interactions but contribute nothing to the rodlet structure. FOXG_02748 is a class II hydrophobin that is likely required for plant colonization. The chain is Class II hydrophobin FOXG_02748 from Fusarium oxysporum f. sp. lycopersici (strain 4287 / CBS 123668 / FGSC 9935 / NRRL 34936) (Fusarium vascular wilt of tomato).